The sequence spans 302 residues: Phosphoribosylaminoimidazole-succinocarboxamide synthase (302 aa).

It belongs to the SAICAR synthetase family.

It carries out the reaction 5-amino-1-(5-phospho-D-ribosyl)imidazole-4-carboxylate + L-aspartate + ATP = (2S)-2-[5-amino-1-(5-phospho-beta-D-ribosyl)imidazole-4-carboxamido]succinate + ADP + phosphate + 2 H(+). It participates in purine metabolism; IMP biosynthesis via de novo pathway; 5-amino-1-(5-phospho-D-ribosyl)imidazole-4-carboxamide from 5-amino-1-(5-phospho-D-ribosyl)imidazole-4-carboxylate: step 1/2. The protein is Phosphoribosylaminoimidazole-succinocarboxamide synthase of Cupriavidus metallidurans (strain ATCC 43123 / DSM 2839 / NBRC 102507 / CH34) (Ralstonia metallidurans).